The following is a 256-amino-acid chain: uncharacterized protein (256 aa).

The first 22 residues, 1–22 (MGYLKRIGMCISLLIVIIFVTS), serve as a signal peptide directing secretion. The N-palmitoyl cysteine moiety is linked to residue Cys-23. Cys-23 is lipidated: S-diacylglycerol cysteine.

This sequence belongs to the staphylococcal tandem lipoprotein family.

It is found in the cell membrane. This is an uncharacterized protein from Staphylococcus aureus (strain MSSA476).